The sequence spans 128 residues: Large ribosomal subunit protein uL18 (128 aa).

Positions 1-36 (MAKRSSLTRRGVSPRAAARARRHMRVRKKVRGTPER) are disordered. Basic residues predominate over residues 18 to 31 (ARARRHMRVRKKVR).

It belongs to the universal ribosomal protein uL18 family. Part of the 50S ribosomal subunit; part of the 5S rRNA/L5/L18/L25 subcomplex. Contacts the 5S and 23S rRNAs.

Functionally, this is one of the proteins that bind and probably mediate the attachment of the 5S RNA into the large ribosomal subunit, where it forms part of the central protuberance. This is Large ribosomal subunit protein uL18 from Thermobifida fusca (strain YX).